We begin with the raw amino-acid sequence, 292 residues long: MSWLQVKVLTDEAGAAALEQIFEGLGALSVTMLDAADDPVLEPDLGTTPLWRNTQVVALFSADTSAEMVREQLERNQIAAADIECEVIEDRDWEREWMTHFHPMRFGSRLWICPSWGEPEDPNGVNLLLDPGLAFGTGTHPTTALCLTWLDSQQLQGKQVIDFGCGSGVLAIAALLLGADHATGTDIDPQALEASRDNAERNSVSEGLTLHFPEQMPEMQAEVVIANILANPLISLAPKLATLTLPGGSIALSGILKDQEEAVAEAYRNYFELDPTEYKEDWVLISGRRLPY.

Positions 143, 164, 186, and 227 each coordinate S-adenosyl-L-methionine.

It belongs to the methyltransferase superfamily. PrmA family.

The protein localises to the cytoplasm. The catalysed reaction is L-lysyl-[protein] + 3 S-adenosyl-L-methionine = N(6),N(6),N(6)-trimethyl-L-lysyl-[protein] + 3 S-adenosyl-L-homocysteine + 3 H(+). Methylates ribosomal protein L11. The protein is Ribosomal protein L11 methyltransferase of Hahella chejuensis (strain KCTC 2396).